The sequence spans 200 residues: Signal peptidase complex catalytic subunit SEC11 (200 aa).

Over 1 to 15 (MFAELAPYLSNPRQT) the chain is Cytoplasmic. Residues 16 to 33 (LAQILNFALVLSTAFMGW) form a helical; Signal-anchor for type II membrane protein membrane-spanning segment. The Lumenal portion of the chain corresponds to 34-200 (KALSVYTNSS…MGVMVMLQRE (167 aa)). N41 carries an N-linked (GlcNAc...) asparagine glycan. Residues S53 and H92 each act as charge relay system in the active site. The segment at 101–131 (GDGGKKSQRRLEKEADKRSGPGLSSPISHQM) is disordered. Residues 103–119 (GGKKSQRRLEKEADKRS) show a composition bias toward basic and acidic residues. D142 serves as the catalytic Charge relay system. The tract at residues 186-197 (VLLGIMGVMVML) is C-terminal short (CTS) helix.

It belongs to the peptidase S26B family. In terms of assembly, component of the signal peptidase complex (SPC) composed of a catalytic subunit SEC11 and three accessory subunits SPC1, SPC2 and SPC3. The complex induces a local thinning of the ER membrane which is used to measure the length of the signal peptide (SP) h-region of protein substrates. This ensures the selectivity of the complex towards h-regions shorter than 18-20 amino acids. SPC associates with the translocon complex.

It localises to the endoplasmic reticulum membrane. The enzyme catalyses Cleavage of hydrophobic, N-terminal signal or leader sequences from secreted and periplasmic proteins.. Catalytic component of the signal peptidase complex (SPC) which catalyzes the cleavage of N-terminal signal sequences from nascent proteins as they are translocated into the lumen of the endoplasmic reticulum. Specifically cleaves N-terminal signal peptides that contain a hydrophobic alpha-helix (h-region) shorter than 18-20 amino acids. The sequence is that of Signal peptidase complex catalytic subunit SEC11 (SEC11) from Arthroderma gypseum (strain ATCC MYA-4604 / CBS 118893) (Microsporum gypseum).